The sequence spans 316 residues: Cyclin-dependent kinase inhibitor 1C (316 aa).

Omega-N-methylarginine is present on arginine 107. Residues 124-153 (ESLDGLEEAPEQLPSVPVPAPASTPPPVPV) are disordered. Pro residues predominate over residues 139–153 (VPVPAPASTPPPVPV). Repeat copies occupy residues 156–159 (PAPA), 160–163 (PAPA), 180–183 (PAPA), 184–187 (PAPA), 188–191 (PAPA), 198–201 (PAPA), 202–205 (PAPA), 206–209 (PAPA), and 210–213 (PAPA). The segment at 156–213 (PAPAPAPAPVAAPVAAPVAVAVLAPAPAPAPAPAPAPAPVAAPAPAPAPAPAPAPAPA) is 9 X 4 AA repeats of P-A-P-A. Residues 181-217 (APAPAPAPAPAPAPVAAPAPAPAPAPAPAPAPAPAPD) show a composition bias toward pro residues. Residues 181–260 (APAPAPAPAP…AAGTAAASAN (80 aa)) form a disordered region. A compositionally biased stretch (polar residues) spans 223–233 (SAEQGANQGQR). A compositionally biased stretch (low complexity) spans 251 to 260 (AAGTAAASAN). Serine 268 carries the post-translational modification Phosphoserine. Positions 278–281 (KRKR) match the Nuclear localization signal motif. Positions 278 to 316 (KRKRSAPEKSSGDVPAPCPSPSAAPGVGSVEQTPRKRLR) are disordered.

It belongs to the CDI family. In terms of assembly, interacts with PCNA. In terms of tissue distribution, expressed in the heart, brain, lung, skeletal muscle, kidney, pancreas and testis. Expressed in the eye. High levels are seen in the placenta while low levels are seen in the liver.

It is found in the nucleus. Potent tight-binding inhibitor of several G1 cyclin/CDK complexes (cyclin E-CDK2, cyclin D2-CDK4, and cyclin A-CDK2) and, to lesser extent, of the mitotic cyclin B-CDC2. Negative regulator of cell proliferation. May play a role in maintenance of the non-proliferative state throughout life. This is Cyclin-dependent kinase inhibitor 1C (CDKN1C) from Homo sapiens (Human).